The sequence spans 532 residues: FRIGIDA-like protein 4b (532 aa).

The protein belongs to the Frigida family. As to expression, expressed in leaves, shoot apex, flowers and during seed development.

In Arabidopsis thaliana (Mouse-ear cress), this protein is FRIGIDA-like protein 4b (FRL4B).